Consider the following 140-residue polypeptide: Small ribosomal subunit protein uS12 (140 aa).

At D102 the chain carries 3-methylthioaspartic acid. Positions 121 to 140 (ANRQQSRSKYGAKKPKAAKK) are disordered. Residues 130–140 (YGAKKPKAAKK) are compositionally biased toward basic residues.

This sequence belongs to the universal ribosomal protein uS12 family. In terms of assembly, part of the 30S ribosomal subunit. Contacts proteins S8 and S17. May interact with IF1 in the 30S initiation complex.

Its function is as follows. With S4 and S5 plays an important role in translational accuracy. Interacts with and stabilizes bases of the 16S rRNA that are involved in tRNA selection in the A site and with the mRNA backbone. Located at the interface of the 30S and 50S subunits, it traverses the body of the 30S subunit contacting proteins on the other side and probably holding the rRNA structure together. The combined cluster of proteins S8, S12 and S17 appears to hold together the shoulder and platform of the 30S subunit. The chain is Small ribosomal subunit protein uS12 from Alkaliphilus oremlandii (strain OhILAs) (Clostridium oremlandii (strain OhILAs)).